A 200-amino-acid chain; its full sequence is Pyridoxal 5'-phosphate synthase subunit PdxT (200 aa).

Position 52–54 (glycine 52–serine 54) interacts with L-glutamine. Cysteine 84 (nucleophile) is an active-site residue. L-glutamine contacts are provided by residues arginine 116 and isoleucine 145–arginine 146. Residues histidine 181 and glutamate 183 each act as charge relay system in the active site.

Belongs to the glutaminase PdxT/SNO family. As to quaternary structure, in the presence of PdxS, forms a dodecamer of heterodimers. Only shows activity in the heterodimer.

It carries out the reaction aldehydo-D-ribose 5-phosphate + D-glyceraldehyde 3-phosphate + L-glutamine = pyridoxal 5'-phosphate + L-glutamate + phosphate + 3 H2O + H(+). The catalysed reaction is L-glutamine + H2O = L-glutamate + NH4(+). Its pathway is cofactor biosynthesis; pyridoxal 5'-phosphate biosynthesis. Catalyzes the hydrolysis of glutamine to glutamate and ammonia as part of the biosynthesis of pyridoxal 5'-phosphate. The resulting ammonia molecule is channeled to the active site of PdxS. This Sulfolobus acidocaldarius (strain ATCC 33909 / DSM 639 / JCM 8929 / NBRC 15157 / NCIMB 11770) protein is Pyridoxal 5'-phosphate synthase subunit PdxT.